The sequence spans 609 residues: Phosphoenolpyruvate carboxykinase [GTP] (609 aa).

Substrate is bound by residues arginine 81 and 220-222; that span reads YGG. Mn(2+)-binding residues include lysine 229 and histidine 249. Position 271 (serine 271) interacts with substrate. 272–277 serves as a coordination point for GTP; the sequence is ACGKTN. Residue cysteine 273 is part of the active site. Residue aspartate 296 participates in Mn(2+) binding. 387–389 is a binding site for substrate; the sequence is NSR. Residues arginine 389, arginine 420, and 515 to 518 each bind GTP; that span reads FGEN.

Belongs to the phosphoenolpyruvate carboxykinase [GTP] family. In terms of assembly, monomer. The cofactor is Mn(2+).

It localises to the cytoplasm. It carries out the reaction oxaloacetate + GTP = phosphoenolpyruvate + GDP + CO2. Its pathway is carbohydrate biosynthesis; gluconeogenesis. Its function is as follows. Catalyzes the conversion of oxaloacetate (OAA) to phosphoenolpyruvate (PEP), the rate-limiting step in the metabolic pathway that produces glucose from lactate and other precursors derived from the citric acid cycle. This Mycobacterium ulcerans (strain Agy99) protein is Phosphoenolpyruvate carboxykinase [GTP].